We begin with the raw amino-acid sequence, 285 residues long: Probable endonuclease 4 (285 aa).

Residues histidine 67, histidine 107, glutamate 144, aspartate 178, histidine 181, histidine 215, aspartate 228, histidine 230, and glutamate 260 each contribute to the Zn(2+) site.

Belongs to the AP endonuclease 2 family. The cofactor is Zn(2+).

The enzyme catalyses Endonucleolytic cleavage to 5'-phosphooligonucleotide end-products.. Endonuclease IV plays a role in DNA repair. It cleaves phosphodiester bonds at apurinic or apyrimidinic (AP) sites, generating a 3'-hydroxyl group and a 5'-terminal sugar phosphate. This chain is Probable endonuclease 4, found in Chloroflexus aurantiacus (strain ATCC 29366 / DSM 635 / J-10-fl).